The sequence spans 197 residues: HTH-type transcriptional regulator BetI (197 aa).

In terms of domain architecture, HTH tetR-type spans 8 to 68 (PIRRQQLIQA…ATMRHLMNAL (61 aa)). Residues 31–50 (SIALIARLAGVSNGIISHYF) constitute a DNA-binding region (H-T-H motif).

It participates in amine and polyamine biosynthesis; betaine biosynthesis via choline pathway [regulation]. In terms of biological role, repressor involved in the biosynthesis of the osmoprotectant glycine betaine. It represses transcription of the choline transporter BetT and the genes of BetAB involved in the synthesis of glycine betaine. This is HTH-type transcriptional regulator BetI from Pseudomonas syringae pv. tomato (strain ATCC BAA-871 / DC3000).